A 434-amino-acid polypeptide reads, in one-letter code: 4-hydroxy-3-methylbut-2-en-1-yl diphosphate synthase (flavodoxin) (434 aa).

A compositionally biased stretch (polar residues) spans 1-15 (MQSEAQSPRSSQICS). Residues 1 to 24 (MQSEAQSPRSSQICSTEPVFGGHQ) are disordered. 4 residues coordinate [4Fe-4S] cluster: cysteine 322, cysteine 325, cysteine 368, and glutamate 375.

This sequence belongs to the IspG family. Requires [4Fe-4S] cluster as cofactor.

It catalyses the reaction (2E)-4-hydroxy-3-methylbut-2-enyl diphosphate + oxidized [flavodoxin] + H2O + 2 H(+) = 2-C-methyl-D-erythritol 2,4-cyclic diphosphate + reduced [flavodoxin]. It functions in the pathway isoprenoid biosynthesis; isopentenyl diphosphate biosynthesis via DXP pathway; isopentenyl diphosphate from 1-deoxy-D-xylulose 5-phosphate: step 5/6. Converts 2C-methyl-D-erythritol 2,4-cyclodiphosphate (ME-2,4cPP) into 1-hydroxy-2-methyl-2-(E)-butenyl 4-diphosphate. This is 4-hydroxy-3-methylbut-2-en-1-yl diphosphate synthase (flavodoxin) from Burkholderia ambifaria (strain MC40-6).